The following is a 92-amino-acid chain: PqqA binding protein (92 aa).

The protein belongs to the PqqD family. In terms of assembly, monomer. Interacts with PqqE.

It participates in cofactor biosynthesis; pyrroloquinoline quinone biosynthesis. Its function is as follows. Functions as a PqqA binding protein and presents PqqA to PqqE, in the pyrroloquinoline quinone (PQQ) biosynthetic pathway. This chain is PqqA binding protein, found in Xanthomonas campestris pv. campestris (strain B100).